Here is an 85-residue protein sequence, read N- to C-terminus: MAERERDREQHERLFKAASNPLRKKMAEKIGNRGITREELKKELGDVSDFEFKFNLDYLIAEGFVVEKDGKLYLTEDGVDLAYGG.

The protein to A.fulgidus AF_0255 and AF_1363.

This is an uncharacterized protein from Archaeoglobus fulgidus (strain ATCC 49558 / DSM 4304 / JCM 9628 / NBRC 100126 / VC-16).